Here is a 382-residue protein sequence, read N- to C-terminus: Toluene efflux pump periplasmic linker protein TtgD (382 aa).

A signal peptide spans 1–23 (MRLERALRARQLIPLAAIWLLVG). Residue cysteine 24 is the site of N-palmitoyl cysteine attachment. Cysteine 24 carries the S-diacylglycerol cysteine lipid modification. Residues 100–136 (YEALLARAEASLLTAQNLARRYERLLDTNAISQQQYD) are a coiled coil.

This sequence belongs to the membrane fusion protein (MFP) (TC 8.A.1) family.

It is found in the cell inner membrane. The periplasmic linker protein component of an inducible organic solvent efflux pump. Involved in export of toluene and styrene but not of m-xylene, propylbenzene or ethylbenzene. Is not involved in antibiotic or AMP efflux. The chain is Toluene efflux pump periplasmic linker protein TtgD (ttgD) from Pseudomonas putida (strain DOT-T1E).